A 930-amino-acid polypeptide reads, in one-letter code: Isoleucine--tRNA ligase (930 aa).

Positions P57–H67 match the 'HIGH' region motif. E554 contacts L-isoleucyl-5'-AMP. The short motif at K595 to S599 is the 'KMSKS' region element. K598 serves as a coordination point for ATP. Zn(2+) is bound by residues C888, C891, C908, and C911.

The protein belongs to the class-I aminoacyl-tRNA synthetase family. IleS type 1 subfamily. Monomer. It depends on Zn(2+) as a cofactor.

It localises to the cytoplasm. The catalysed reaction is tRNA(Ile) + L-isoleucine + ATP = L-isoleucyl-tRNA(Ile) + AMP + diphosphate. Functionally, catalyzes the attachment of isoleucine to tRNA(Ile). As IleRS can inadvertently accommodate and process structurally similar amino acids such as valine, to avoid such errors it has two additional distinct tRNA(Ile)-dependent editing activities. One activity is designated as 'pretransfer' editing and involves the hydrolysis of activated Val-AMP. The other activity is designated 'posttransfer' editing and involves deacylation of mischarged Val-tRNA(Ile). The polypeptide is Isoleucine--tRNA ligase (Streptococcus pneumoniae (strain Hungary19A-6)).